Here is a 467-residue protein sequence, read N- to C-terminus: UDP-N-acetylmuramate--L-alanine ligase (467 aa).

An ATP-binding site is contributed by 123–129 (GTHGKST).

The protein belongs to the MurCDEF family.

It localises to the cytoplasm. It catalyses the reaction UDP-N-acetyl-alpha-D-muramate + L-alanine + ATP = UDP-N-acetyl-alpha-D-muramoyl-L-alanine + ADP + phosphate + H(+). It participates in cell wall biogenesis; peptidoglycan biosynthesis. In terms of biological role, cell wall formation. This Arthrobacter sp. (strain FB24) protein is UDP-N-acetylmuramate--L-alanine ligase.